We begin with the raw amino-acid sequence, 240 residues long: Ubiquinone biosynthesis O-methyltransferase (240 aa).

Residues Arg44, Gly64, Asp85, and Met129 each contribute to the S-adenosyl-L-methionine site.

It belongs to the methyltransferase superfamily. UbiG/COQ3 family.

The catalysed reaction is a 3-demethylubiquinol + S-adenosyl-L-methionine = a ubiquinol + S-adenosyl-L-homocysteine + H(+). It carries out the reaction a 3-(all-trans-polyprenyl)benzene-1,2-diol + S-adenosyl-L-methionine = a 2-methoxy-6-(all-trans-polyprenyl)phenol + S-adenosyl-L-homocysteine + H(+). It participates in cofactor biosynthesis; ubiquinone biosynthesis. O-methyltransferase that catalyzes the 2 O-methylation steps in the ubiquinone biosynthetic pathway. In Escherichia coli (strain ATCC 8739 / DSM 1576 / NBRC 3972 / NCIMB 8545 / WDCM 00012 / Crooks), this protein is Ubiquinone biosynthesis O-methyltransferase.